Reading from the N-terminus, the 463-residue chain is MENTLVKSLYRDTDKYAGQTVQVSGWIRNLRDSKAFGFIELNDGSFFKSVQIVFDTELDNFKEIAKLPLSSSVKVEGKVIATPGAKQPFEIKAEKIDIEGLSDSDYPLQKKRHTFEYLRTIAHLRPRTNAFSATFRVRSIAAFAIHQFFQERGFVHVHTPIITGSDTEGAGEMFRVTTQDLNNVPKDEDGQVDESKDFFGKETNLTVSGQLNAEAYALAFRDVYTFGPTFRAENSNTTRHAAEFWMVEPEIAFAELGDVMNLTEDMLKYAMKYVLEHAPEEMEFFNSFVDKTVLERMNNVINSDFGRITYTEAIKVLQESGADFKYPVEWGIDLQTEHERYLSEEIFKRPVFVTDYPKDIKAFYMRLNDDGKTVAATDLLVPGIGELIGGSQREERMDVLVDRIKELGMNEEDYWWYLELRKYGGTKHAGFGLGFERFLMYITGMANIRDVIPFPRTPGSSEF.

This sequence belongs to the class-II aminoacyl-tRNA synthetase family. As to quaternary structure, homodimer.

The protein localises to the cytoplasm. It carries out the reaction tRNA(Asn) + L-asparagine + ATP = L-asparaginyl-tRNA(Asn) + AMP + diphosphate + H(+). This is Asparagine--tRNA ligase from Bacillus thuringiensis subsp. konkukian (strain 97-27).